Reading from the N-terminus, the 304-residue chain is Glutaminase (304 aa).

Residues Ser-63, Asn-114, Glu-158, Asn-165, Tyr-189, Tyr-240, and Val-258 each contribute to the substrate site.

It belongs to the glutaminase family. In terms of assembly, homotetramer.

The catalysed reaction is L-glutamine + H2O = L-glutamate + NH4(+). The sequence is that of Glutaminase from Shewanella sp. (strain ANA-3).